The following is a 154-amino-acid chain: 6,7-dimethyl-8-ribityllumazine synthase (154 aa).

Residues phenylalanine 22, 56–58 (AFE), and 80–82 (AVI) contribute to the 5-amino-6-(D-ribitylamino)uracil site. 85–86 (ST) contributes to the (2S)-2-hydroxy-3-oxobutyl phosphate binding site. Histidine 88 acts as the Proton donor in catalysis. A 5-amino-6-(D-ribitylamino)uracil-binding site is contributed by phenylalanine 113. Position 127 (arginine 127) interacts with (2S)-2-hydroxy-3-oxobutyl phosphate.

The protein belongs to the DMRL synthase family.

The catalysed reaction is (2S)-2-hydroxy-3-oxobutyl phosphate + 5-amino-6-(D-ribitylamino)uracil = 6,7-dimethyl-8-(1-D-ribityl)lumazine + phosphate + 2 H2O + H(+). The protein operates within cofactor biosynthesis; riboflavin biosynthesis; riboflavin from 2-hydroxy-3-oxobutyl phosphate and 5-amino-6-(D-ribitylamino)uracil: step 1/2. Functionally, catalyzes the formation of 6,7-dimethyl-8-ribityllumazine by condensation of 5-amino-6-(D-ribitylamino)uracil with 3,4-dihydroxy-2-butanone 4-phosphate. This is the penultimate step in the biosynthesis of riboflavin. The sequence is that of 6,7-dimethyl-8-ribityllumazine synthase from Clostridium kluyveri (strain NBRC 12016).